The primary structure comprises 238 residues: Transcriptional repressor ThaA (238 aa).

The HTH luxR-type domain occupies 169–234 (IPGEIARVSL…HAAVKATLVG (66 aa)). A DNA-binding region (H-T-H motif) is located at residues 193-212 (VSEISSILQMSVRNINFHIQ).

It belongs to the autoinducer-regulated transcriptional regulatory protein family.

Its function is as follows. Represses thailandamide production. This Burkholderia thailandensis (strain ATCC 700388 / DSM 13276 / CCUG 48851 / CIP 106301 / E264) protein is Transcriptional repressor ThaA.